The chain runs to 277 residues: Ribosomal RNA small subunit methyltransferase A (277 aa).

Positions 26, 28, 53, 74, 101, and 123 each coordinate S-adenosyl-L-methionine.

The protein belongs to the class I-like SAM-binding methyltransferase superfamily. rRNA adenine N(6)-methyltransferase family. RsmA subfamily.

It is found in the cytoplasm. It catalyses the reaction adenosine(1518)/adenosine(1519) in 16S rRNA + 4 S-adenosyl-L-methionine = N(6)-dimethyladenosine(1518)/N(6)-dimethyladenosine(1519) in 16S rRNA + 4 S-adenosyl-L-homocysteine + 4 H(+). Its function is as follows. Specifically dimethylates two adjacent adenosines (A1518 and A1519) in the loop of a conserved hairpin near the 3'-end of 16S rRNA in the 30S particle. May play a critical role in biogenesis of 30S subunits. The protein is Ribosomal RNA small subunit methyltransferase A of Opitutus terrae (strain DSM 11246 / JCM 15787 / PB90-1).